The primary structure comprises 138 residues: Acidic phospholipase A2 Cvv-E6b (138 aa).

The N-terminal stretch at Met-1–Gly-16 is a signal peptide. Cystine bridges form between Cys-42–Cys-131, Cys-44–Cys-60, Cys-59–Cys-111, Cys-65–Cys-138, Cys-66–Cys-104, Cys-73–Cys-97, and Cys-91–Cys-102. 3 residues coordinate Ca(2+): Tyr-43, Gly-45, and Gly-47. The active site involves His-63. Position 64 (Asp-64) interacts with Ca(2+). Asp-105 is an active-site residue.

It depends on Ca(2+) as a cofactor. In terms of tissue distribution, expressed by the venom gland.

The protein localises to the secreted. The enzyme catalyses a 1,2-diacyl-sn-glycero-3-phosphocholine + H2O = a 1-acyl-sn-glycero-3-phosphocholine + a fatty acid + H(+). Snake venom phospholipase A2 (PLA2) that shows very low inhibition of ADP-induced platelet aggregation in platelet-rich plasma of human, rabbit and guinea pig. PLA2 catalyzes the calcium-dependent hydrolysis of the 2-acyl groups in 3-sn-phosphoglycerides. The polypeptide is Acidic phospholipase A2 Cvv-E6b (Crotalus viridis viridis (Prairie rattlesnake)).